The chain runs to 437 residues: Transcription factor AP-2-alpha (437 aa).

Residue Lys-10 forms a Glycyl lysine isopeptide (Lys-Gly) (interchain with G-Cter in SUMO); alternate linkage. Lys-10 is covalently cross-linked (Glycyl lysine isopeptide (Lys-Gly) (interchain with G-Cter in SUMO2); alternate). Residues 14 to 107 are disordered; the sequence is CEDRHDGTSN…GQRQSQESGL (94 aa). The short motif at 57 to 62 is the PPxY motif element; sequence YFPPPY. 2 stretches are compositionally biased toward low complexity: residues 65–74 and 88–101; these read IYPQSQDPYS and QPQP…GQRQ. Residues Lys-177 and Lys-184 each participate in a glycyl lysine isopeptide (Lys-Gly) (interchain with G-Cter in SUMO2) cross-link. The residue at position 239 (Ser-239) is a Phosphoserine; by PKA. The tract at residues 280 to 410 is H-S-H (helix-span-helix), dimerization; sequence RRKAANVTLL…YLTEALKAMD (131 aa). The segment covering 414–427 has biased composition (polar residues); sequence LSNNPNSHTDNSAK. The interval 414-437 is disordered; sequence LSNNPNSHTDNSAKSSDKEEKHRK. The segment covering 428–437 has biased composition (basic and acidic residues); it reads SSDKEEKHRK.

It belongs to the AP-2 family. As to quaternary structure, binds DNA as a dimer. Can form homodimers or heterodimers with other AP-2 family members. Interacts with WWOX. Interacts with UBE2I. Interacts with RALBP1 in a complex also containing EPN1 and NUMB during interphase and mitosis. Interacts with CITED4. Interacts with KCTD1; this interaction represses transcription activation. Interacts (via C-terminus) with CITED2 (via C-terminus); the interaction stimulates TFAP2A-transcriptional activation. Interacts (via N-terminus) with EP300 (via N-terminus); the interaction requires CITED2. Interacts with KCTD15; this interaction inhibits TFAP2A transcriptional activation. Sumoylated on Lys-10; which inhibits transcriptional activity.

It localises to the nucleus. Sequence-specific DNA-binding protein that interacts with inducible viral and cellular enhancer elements to regulate transcription of selected genes. AP-2 factors bind to the consensus sequence 5'-GCCNNNGGC-3' and activate genes involved in a large spectrum of important biological functions including proper eye, face, body wall, limb and neural tube development. They also suppress a number of genes including MCAM/MUC18, C/EBP alpha and MYC. AP-2-alpha is the only AP-2 protein required for early morphogenesis of the lens vesicle. Together with the CITED2 coactivator, stimulates the PITX2 P1 promoter transcription activation. Associates with chromatin to the PITX2 P1 promoter region. The chain is Transcription factor AP-2-alpha (Tfap2a) from Mus musculus (Mouse).